We begin with the raw amino-acid sequence, 262 residues long: MEPFTHNDGNRDELIIQQKRDIEKEISDTTPLVSEQLPLTCLYAEYSGDEIFTAKIQDLSKKYKFIRRTRPDGNCFFRAFAYSYLEYLISNTSAYQEFKKLAEESKEKLVQLGFPSFTLEDFHETFMEVIQRVSPDNAGGHSTVQDELHKIFNEQGYSDYVVVYLRLITSGKLQEEADFYQNFIEGDLTIEAFRHLEVEPMYKESDHIHIIALCTALGAGVRVEYLDRGEGGTVKAHDFPEGSEPRIYLIYRPGHYDILYPN.

Residues 64-262 (KFIRRTRPDG…PGHYDILYPN (199 aa)) enclose the OTU domain. Asp-72 is an active-site residue. The Nucleophile role is filled by Cys-75. Ile-168 contacts substrate. His-255 is an active-site residue.

Belongs to the peptidase C65 family.

The catalysed reaction is Thiol-dependent hydrolysis of ester, thioester, amide, peptide and isopeptide bonds formed by the C-terminal Gly of ubiquitin (a 76-residue protein attached to proteins as an intracellular targeting signal).. In terms of biological role, possible hydrolase that can remove conjugated ubiquitin from proteins in vitro and may therefore play an important regulatory role at the level of protein turnover by preventing degradation. In Drosophila melanogaster (Fruit fly), this protein is Ubiquitin thioesterase otubain-like.